The following is a 229-amino-acid chain: Synaptogyrin-3 (229 aa).

Methionine 1 bears the N-acetylmethionine mark. Residues 20 to 172 (FARRPQTLLR…LTVKALQRFR (153 aa)) form the MARVEL domain. Transmembrane regions (helical) follow at residues 30 to 50 (VASW…GYVN), 70 to 90 (FGVA…LLDV), 105 to 125 (VLLD…GFCF), and 148 to 168 (AAIA…VKAL). Residues 209 to 219 (QSPPFTETLDT) are compositionally biased toward polar residues. The tract at residues 209 to 229 (QSPPFTETLDTSPKGYQVPAY) is disordered.

This sequence belongs to the synaptogyrin family. In terms of assembly, interacts (via N-terminus) with SLC6A3 (via N-terminus). May interact with VMAT2. In terms of tissue distribution, expressed in brain and placenta.

It localises to the cytoplasmic vesicle. Its subcellular location is the secretory vesicle. The protein resides in the synaptic vesicle membrane. The protein localises to the synapse. May play a role in regulated exocytosis. May indirectly regulate the activity of the plasma membrane dopamine transporter SLC6A3 and thereby regulate dopamine transport back from the synaptic cleft into the presynaptic terminal. This chain is Synaptogyrin-3, found in Homo sapiens (Human).